The following is a 92-amino-acid chain: C-C motif chemokine 4-like (92 aa).

The N-terminal stretch at 1-23 (MKLCVTVLSLLVLVAAFCSLALS) is a signal peptide. 2 disulfide bridges follow: Cys-34–Cys-58 and Cys-35–Cys-74.

It belongs to the intercrine beta (chemokine CC) family. Interacts with CCR5. Detected in B-cells.

It is found in the secreted. Functionally, chemokine that induces chemotaxis of cells expressing CCR5 or CCR1. Inhibits HIV replication in peripheral blood monocytes that express CCR5. The polypeptide is C-C motif chemokine 4-like (CCL4L1) (Homo sapiens (Human)).